The chain runs to 303 residues: GTPase Era (303 aa).

Residues 9–176 (KSGFVSIIGR…VEQIVEHMEE (168 aa)) enclose the Era-type G domain. Residues 17 to 24 (GRPNVGKS) are G1. 17 to 24 (GRPNVGKS) contacts GTP. Residues 43–47 (QTTRN) form a G2 region. The interval 64–67 (DTPG) is G3. GTP is bound by residues 64–68 (DTPGI) and 126–129 (NKID). Residues 126–129 (NKID) form a G4 region. Residues 155 to 157 (ISA) are G5. Residues 199 to 284 (IREKVLHLTK…YLELWVKVQK (86 aa)) enclose the KH type-2 domain.

The protein belongs to the TRAFAC class TrmE-Era-EngA-EngB-Septin-like GTPase superfamily. Era GTPase family. In terms of assembly, monomer.

It is found in the cytoplasm. The protein resides in the cell membrane. An essential GTPase that binds both GDP and GTP, with rapid nucleotide exchange. Plays a role in 16S rRNA processing and 30S ribosomal subunit biogenesis and possibly also in cell cycle regulation and energy metabolism. This Shouchella clausii (strain KSM-K16) (Alkalihalobacillus clausii) protein is GTPase Era.